Consider the following 66-residue polypeptide: MKANEIRDLATSEIELKVKSLKEELFNLRFQLATGQLENTARIREVRKAIARMKTVIREREISANN.

This sequence belongs to the universal ribosomal protein uL29 family.

The protein is Large ribosomal subunit protein uL29 of Lysinibacillus sphaericus (strain C3-41).